The chain runs to 157 residues: 6,7-dimethyl-8-ribityllumazine synthase (157 aa).

5-amino-6-(D-ribitylamino)uracil contacts are provided by residues Phe22, 57 to 59 (AYE), and 81 to 83 (TVI). 86 to 87 (GT) contributes to the (2S)-2-hydroxy-3-oxobutyl phosphate binding site. The Proton donor role is filled by His89. Phe114 serves as a coordination point for 5-amino-6-(D-ribitylamino)uracil. Residue Arg128 coordinates (2S)-2-hydroxy-3-oxobutyl phosphate.

Belongs to the DMRL synthase family. As to quaternary structure, forms an icosahedral capsid composed of 60 subunits, arranged as a dodecamer of pentamers.

The catalysed reaction is (2S)-2-hydroxy-3-oxobutyl phosphate + 5-amino-6-(D-ribitylamino)uracil = 6,7-dimethyl-8-(1-D-ribityl)lumazine + phosphate + 2 H2O + H(+). It participates in cofactor biosynthesis; riboflavin biosynthesis; riboflavin from 2-hydroxy-3-oxobutyl phosphate and 5-amino-6-(D-ribitylamino)uracil: step 1/2. Its function is as follows. Catalyzes the formation of 6,7-dimethyl-8-ribityllumazine by condensation of 5-amino-6-(D-ribitylamino)uracil with 3,4-dihydroxy-2-butanone 4-phosphate. This is the penultimate step in the biosynthesis of riboflavin. This chain is 6,7-dimethyl-8-ribityllumazine synthase, found in Histophilus somni (strain 129Pt) (Haemophilus somnus).